The following is a 370-amino-acid chain: MRLDEIKIQNFRKHSELIFSPSEGINLIFGPNGSGKTNILEAIHYCALTKGFNRTTDRQCMNFSAESFLLKSLFTSDTGCQYRVHVDFSTNGGKSISLNNSQLEKFSALIGLIPCILFSPAEITIVHGSPQERRRFLDNALCQISKSYLEQLLQYRRILQQRNALLHSSWDRSSPAPDMNIWTELLAESGAFIIKERMDFLDEFQPYFSNAYAILDTGEIPRLTYRSSLGKALVSSDRAGIADSLMHRFGEIQHQEQVRKQTLLGPHRDEILFYLDGSDVKKYASQGQTRTFLIALKVALQRFLFDKKGEQSIFLLDDIFSELDQRRVERVLEMIAGFGQSLITSTEKTGLSFLHEISIHDMLYKHGDPL.

30 to 37 contributes to the ATP binding site; sequence GPNGSGKT.

The protein belongs to the RecF family.

The protein resides in the cytoplasm. Functionally, the RecF protein is involved in DNA metabolism; it is required for DNA replication and normal SOS inducibility. RecF binds preferentially to single-stranded, linear DNA. It also seems to bind ATP. This Prosthecochloris aestuarii (strain DSM 271 / SK 413) protein is DNA replication and repair protein RecF.